We begin with the raw amino-acid sequence, 376 residues long: Glutamate 5-kinase (376 aa).

K15 contributes to the ATP binding site. Residues S56, D143, and N155 each coordinate substrate. Residue 175-176 (SD) participates in ATP binding. Positions 281–358 (KGTLTIDAGA…PDVMSILGIT (78 aa)) constitute a PUA domain.

It belongs to the glutamate 5-kinase family.

It localises to the cytoplasm. It carries out the reaction L-glutamate + ATP = L-glutamyl 5-phosphate + ADP. Its pathway is amino-acid biosynthesis; L-proline biosynthesis; L-glutamate 5-semialdehyde from L-glutamate: step 1/2. In terms of biological role, catalyzes the transfer of a phosphate group to glutamate to form L-glutamate 5-phosphate. This is Glutamate 5-kinase from Rhodopseudomonas palustris (strain BisB18).